Consider the following 599-residue polypeptide: BICD family-like cargo adapter 1 (599 aa).

A disordered region spans residues 1 to 27 (MELPISFLSDSSRPAASSERGDQAALG). Positions 76–80 (AARLG) match the CC1 box motif. Positions 80 to 341 (GKALLERNQD…WEAHCQVRSL (262 aa)) form a coiled coil. The disordered stretch occupies residues 352 to 375 (DSAVSTDSSMDESSETSSAKDVPA). Residues 405-536 (EDDGLEEQIK…LEAWQDDMHR (132 aa)) are a coiled coil.

The protein belongs to the BICDR family. Part of a tripartite complex with dynein and dynactin, acts an adapter linking the dynein motor complex and dynactin. Interacts with KIF1C. Interacts with RAB6A and RAB6B; interaction is specific to Rab6.

The protein localises to the cytoplasm. It is found in the cytoskeleton. The protein resides in the microtubule organizing center. Its subcellular location is the centrosome. In terms of biological role, acts as an adapter protein linking the dynein motor complex to various cargos and converts dynein from a non-processive to a highly processive motor in the presence of dynactin. Facilitates the interaction between dynein and dynactin and activates dynein processivity (the ability to move along a microtubule for a long distance without falling off the track). Predominantly recruits 2 dyneins, which increases both the force and speed of the microtubule motor. Component of secretory vesicle machinery in developing neurons that acts as a regulator of neurite outgrowth. Regulates the secretory vesicle transport by controlling the accumulation of Rab6-containing secretory vesicles in the pericentrosomal region restricting anterograde secretory transport during the early phase of neuronal differentiation, thereby inhibiting neuritogenesis. This chain is BICD family-like cargo adapter 1 (bicdl1), found in Xenopus tropicalis (Western clawed frog).